Here is an 859-residue protein sequence, read N- to C-terminus: Homeobox-leucine zipper protein HOX32 (859 aa).

Residues alanine 7–glycine 31 form a disordered region. A DNA-binding region (homeobox) is located at residues aspartate 29–lysine 92. Residues valine 100–asparagine 129 are a coiled coil. Polar residues predominate over residues threonine 146–alanine 164. A disordered region spans residues threonine 146–alanine 172. Residues aspartate 171–glutamate 393 form the START domain.

It belongs to the HD-ZIP homeobox family. Class III subfamily. In terms of tissue distribution, expressed in seedlings, roots, stems, leaf sheaths and blades and panicles.

The protein resides in the nucleus. Its function is as follows. Probable transcription factor. This Oryza sativa subsp. japonica (Rice) protein is Homeobox-leucine zipper protein HOX32 (HOX32).